We begin with the raw amino-acid sequence, 873 residues long: Zinc fingers and homeoboxes protein 1 (873 aa).

T36 carries the phosphothreonine modification. Positions 41 to 63 (AKAESVSSDEEVHGSVDSDNQQN) are disordered. Residues S45, S47, and S48 each carry the phosphoserine modification. Over residues 50 to 63 (EEVHGSVDSDNQQN) the composition is skewed to basic and acidic residues. C2H2-type zinc fingers lie at residues 70 to 93 (YECK…DSEH) and 102 to 125 (YVCV…LKYH). K159 participates in a covalent cross-link: Glycyl lysine isopeptide (Lys-Gly) (interchain with G-Cter in SUMO2). Residues 198-247 (VHHNSAEGTSEEKENGVKASQEENAESVSSSALESNTSTSTINRVHPSPA) form a disordered region. Phosphoserine is present on S202. A compositionally biased stretch (low complexity) spans 223-238 (ESVSSSALESNTSTST). The segment at 272–432 (NSNLLPKVLI…QTNVQKSQVP (161 aa)) is required for dimerization. Residues 272–564 (NSNLLPKVLI…SQQKQSWNPF (293 aa)) form a required for interaction with NFYA region. The segment at residues 284 to 346 (NSIPTYNAAL…LKHGVSWTPE (63 aa)) is a DNA-binding region (homeobox 1). Positions 429–456 (SQVPAAQPATDTKPATAAVPSSPSVRPE) are disordered. Residues K441 and K485 each participate in a glycyl lysine isopeptide (Lys-Gly) (interchain with G-Cter in SUMO2) cross-link. Residues 464–526 (SFGIRAKKTK…YNQRNSKSNQ (63 aa)) constitute a DNA-binding region (homeobox 2). Disordered regions lie at residues 541 to 568 (DSSD…PDFA), 627 to 668 (DEKI…CKKT), and 731 to 767 (SSSL…KRMN). Positions 569–630 (PQKFKEKTAE…KTKALKDEKI (62 aa)) form a DNA-binding region, homeobox 3. A Glycyl lysine isopeptide (Lys-Gly) (interchain with G-Cter in SUMO2) cross-link involves residue K629. Position 648 is a phosphoserine (S648). A DNA-binding region (homeobox 4) is located at residues 660–722 (GTGKICKKTP…YAWKNGNLKW (63 aa)). The segment at 734–768 (LNGLSSLRRRGRGRPKGRGRGRPRGRPRGGKRMNT) is required for nuclear localization. Residues 740–764 (LRRRGRGRPKGRGRGRPRGRPRGGK) show a composition bias toward basic residues. Position 774 is a phosphoserine (S774). The segment at residues 777-832 (KFKTGTAILKDYYLKHKFLNEQDLDELVNRSHMGYEQVREWFAERQRRSELGIELF) is a DNA-binding region (homeobox 5). The segment at 829–873 (IELFEENEEEDEVVDDQEEDEEETDDSDTWEPPRHVKRKLSKSDD) is disordered. Residues 831 to 857 (LFEENEEEDEVVDDQEEDEEETDDSDT) are compositionally biased toward acidic residues. The interval 831-873 (LFEENEEEDEVVDDQEEDEEETDDSDTWEPPRHVKRKLSKSDD) is required for repressor activity. The segment covering 863-873 (HVKRKLSKSDD) has biased composition (basic residues).

Belongs to the ZHX family. In terms of assembly, forms homodimers. Heterodimer (via HD1 domain) with ZHX2 (via HD1 domain). Also forms a heterodimer with ZHX3 which is a prerequisite for repressor activity. Interacts with ATF7IP and NFYA. Interacts (via homeobox domains) with DNMT3B (via PWWP domain). In terms of tissue distribution, widely expressed with highest levels in brain.

It localises to the nucleus. Its function is as follows. Acts as a transcriptional repressor. Increases DNMT3B-mediated repressive transcriptional activity when DNMT3B is tethered to DNA. May link molecule between DNMT3B and other co-repressor proteins. The chain is Zinc fingers and homeoboxes protein 1 (Zhx1) from Mus musculus (Mouse).